A 1328-amino-acid chain; its full sequence is ATP-dependent DNA helicase hus2/rqh1 (1328 aa).

2 stretches are compositionally biased toward low complexity: residues asparagine 217 to asparagine 236 and alanine 244 to glutamine 254. A disordered region spans residues asparagine 217–glutamine 254. Residues isoleucine 528 to leucine 707 enclose the Helicase ATP-binding domain. Alanine 555–serine 562 is an ATP binding site. Residues aspartate 651–histidine 654 carry the DEAH box motif. The region spanning leucine 728–leucine 876 is the Helicase C-terminal domain. The region spanning isoleucine 1115–asparagine 1195 is the HRDC domain. Disordered stretches follow at residues glutamate 1224–glutamate 1247 and asparagine 1260–arginine 1328. Residues asparagine 1260–serine 1269 are compositionally biased toward polar residues. Residues lysine 1283–tyrosine 1300 show a composition bias toward basic residues.

The protein belongs to the helicase family. RecQ subfamily. In terms of assembly, interacts with top3.

The protein resides in the nucleus. It carries out the reaction Couples ATP hydrolysis with the unwinding of duplex DNA by translocating in the 3'-5' direction.. The catalysed reaction is ATP + H2O = ADP + phosphate + H(+). Functionally, ATP-dependent 3'-5' DNA-helicase. Has a role in the repair of UV-induced DNA damage in G2 via recombination-mediated repair. Also has a role in the repair of infrared-induced double DNA strand breaks. The protein is ATP-dependent DNA helicase hus2/rqh1 of Schizosaccharomyces pombe (strain 972 / ATCC 24843) (Fission yeast).